A 246-amino-acid chain; its full sequence is uncharacterized protein (246 aa).

The first 24 residues, 1–24 (MGAPLRHCLLVAAALSLGCGVAAA), serve as a signal peptide directing secretion. 2 helical membrane passes run 71–91 (YYLG…IGLV) and 104–124 (FTCA…AGGA).

It is found in the cell membrane. This is an uncharacterized protein from Mycobacterium tuberculosis (strain ATCC 25618 / H37Rv).